A 332-amino-acid chain; its full sequence is Endo-1,4-beta-xylanase B (332 aa).

A GH10 domain is found at 2–331 (STEIPSLSAS…KDSFWRIIGQ (330 aa)). The Proton donor role is filled by E134. E241 (nucleophile) is an active-site residue.

Belongs to the glycosyl hydrolase 10 (cellulase F) family. Cytoplasmic xylanase subfamily.

It localises to the cytoplasm. It catalyses the reaction Endohydrolysis of (1-&gt;4)-beta-D-xylosidic linkages in xylans.. Its pathway is glycan degradation; xylan degradation. Its activity is regulated as follows. Completely inhibited by Ag(2+), Cu(2+), Hg(2+), Mn(2+), Pb(2+) and Sn(2+). Strongly inhibited by Fe(2+) and Zn(2+). Co(2+) and Ni(2+) cause little inhibition while Ca(2+) and Mg(2+) do not affect enzyme activity, and Ba(2+) produces a small stimulating effect. Irreversibly inactivated by SDS in vitro. Functionally, plays a role in plant xylan biodegradation, probably via the hydrolysis of short xylooligosaccharides resulting from extracellular xylan hydrolysis, once they have been transported inside cells. Shows similar activity on xylans of different rate of arabinose or methylglucuronic substitution. Also displays high activity on aryl-xylosides. Is active on xylotetraose and xylotriose, but does not hydrolyze xylobiose, indicating that XynB is a xylanase and not a beta-xylosidase. The sequence is that of Endo-1,4-beta-xylanase B (xynB) from Paenibacillus barcinonensis.